Consider the following 129-residue polypeptide: NADH-quinone oxidoreductase subunit 15 (129 aa).

The protein belongs to the complex I Nqo15 family. NDH-1 is composed of 15 different subunits, Nqo1 to Nqo15. The complex has a L-shaped structure, with the hydrophobic arm (subunits Nqo7, Nqo8 and Nqo10 to Nqo14) embedded in the membrane and the hydrophilic peripheral arm (subunits Nqo1 to Nqo6, Nqo9 and Nqo15) protruding into the bacterial cytoplasm. The hydrophilic domain contains all the redox centers. Nqo15 is bound to the side of the complex near the N-terminus of Nqo3, where it interacts with subunits Nqo3, Nqo2, Nqo1, Nqo9 and Nqo4.

The protein localises to the cell membrane. The catalysed reaction is a quinone + NADH + 5 H(+)(in) = a quinol + NAD(+) + 4 H(+)(out). Its function is as follows. NDH-1 shuttles electrons from NADH, via FMN and iron-sulfur (Fe-S) centers, to quinones in the respiratory chain. The immediate electron acceptor for the enzyme in this species is menaquinone. Couples the redox reaction to proton translocation (for every two electrons transferred, four hydrogen ions are translocated across the cytoplasmic membrane), and thus conserves the redox energy in a proton gradient required for the synthesis of ATP. The Nqo15 subunit has probably a role in complex stabilization, and may be also involved in the storage of iron for iron-sulfur cluster regeneration in the complex. This is NADH-quinone oxidoreductase subunit 15 (nqo15) from Thermus thermophilus (strain ATCC 27634 / DSM 579 / HB8).